A 176-amino-acid polypeptide reads, in one-letter code: NAD(P)H-quinone oxidoreductase subunit J (176 aa).

Belongs to the complex I 30 kDa subunit family. As to quaternary structure, NDH-1 can be composed of about 15 different subunits; different subcomplexes with different compositions have been identified which probably have different functions.

It is found in the cellular thylakoid membrane. The catalysed reaction is a plastoquinone + NADH + (n+1) H(+)(in) = a plastoquinol + NAD(+) + n H(+)(out). The enzyme catalyses a plastoquinone + NADPH + (n+1) H(+)(in) = a plastoquinol + NADP(+) + n H(+)(out). Its function is as follows. NDH-1 shuttles electrons from an unknown electron donor, via FMN and iron-sulfur (Fe-S) centers, to quinones in the respiratory and/or the photosynthetic chain. The immediate electron acceptor for the enzyme in this species is believed to be plastoquinone. Couples the redox reaction to proton translocation, and thus conserves the redox energy in a proton gradient. Cyanobacterial NDH-1 also plays a role in inorganic carbon-concentration. The protein is NAD(P)H-quinone oxidoreductase subunit J of Nostoc punctiforme (strain ATCC 29133 / PCC 73102).